The sequence spans 137 residues: MPTINQLVRKPRKSKIEKSDSPALNIGYNSHKKVQTKMAAPQKRGVATRVGTMTPKKPNSALRKFARVRLSNLIEVTAYIPGIGHNLQEHSVVLIRGGRVKDLPGVRYHIVRGALDTAGVADRKQGRSKYGAKRPKG.

Disordered stretches follow at residues 1–21 (MPTI…KSDS) and 33–57 (KVQT…TPKK).

Belongs to the universal ribosomal protein uS12 family. Part of the 30S ribosomal subunit. Contacts proteins S8 and S17. May interact with IF1 in the 30S initiation complex.

With S4 and S5 plays an important role in translational accuracy. Functionally, interacts with and stabilizes bases of the 16S rRNA that are involved in tRNA selection in the A site and with the mRNA backbone. Located at the interface of the 30S and 50S subunits, it traverses the body of the 30S subunit contacting proteins on the other side and probably holding the rRNA structure together. The combined cluster of proteins S8, S12 and S17 appears to hold together the shoulder and platform of the 30S subunit. The polypeptide is Small ribosomal subunit protein uS12 (Streptococcus pyogenes serotype M1).